Reading from the N-terminus, the 195-residue chain is Apoptosis-associated speck-like protein containing a CARD (195 aa).

The Pyrin domain maps to 1-91 (MGCTRDAILD…AEQLQETMSK (91 aa)). Glycyl lysine isopeptide (Lys-Gly) (interchain with G-Cter in ubiquitin) cross-links involve residues K55 and K174. A CARD domain is found at 107 to 195 (TAKPGLHFVD…PYLVDDLEQS (89 aa)). The residue at position 195 (S195) is a Phosphoserine.

As to quaternary structure, self-associates; enforced oligomerization induces apoptosis, NF-kappa-B regulation and interleukin-1 beta secretion. Homooligomers can form disk-like particles of approximately 12 nm diameter and approximately 1 nm height. Component of several inflammasomes containing one pattern recognition receptor/sensor, such as NLRP1, NLRP2, NLRP3, NLRP6, NLRC4, AIM2, MEFV or NOD2, and probably NLRC4 or NLRP12. Major component of the ASC pyroptosome, a 1-2 um supramolecular assembly (one per macrophage cell) which consists of oligomerized PYCARD dimers and CASP1. Interacts with CASP1 (precursor form); the interaction induces activation of CASP1 leading to the processing of interleukin-1 beta; PYCARD competes with RIPK2 for binding to CASP1. Interacts with NLRP3; the interaction requires the homooligomerization of NLRP3. Interacts with NLRP2, NLRC4, MEFV, CARD16, AIM2, NOD2, RIGI, RIPK2, PYDC1, PYDC2, NLRP10, CASP8, CHUK, IKBKB and BAX. Component of the AIM2 PANoptosome complex, a multiprotein complex that drives inflammatory cell death (PANoptosis). Post-translationally, phosphorylated. 'Lys-63'-linked polyubiquitination by TRAF3 is critical for speck formation and inflammasome activation. 'Lys-63'-linked deubiquitinated by USP50; a crucial step for NLRP3-mediated inflammasome activation. 'Lys-63'-linked polyubiquitination by PELI1 is also critical for speck formation and inflammasome activation. Deubiquitinated by USP3 that cleaves 'Lys-48'-linked ubiquitin chains and strengthens its stability by blocking proteasomal degradation.

The protein resides in the cytoplasm. Its subcellular location is the inflammasome. The protein localises to the endoplasmic reticulum. It is found in the mitochondrion. It localises to the nucleus. In terms of biological role, functions as a key mediator in apoptosis and inflammation. Promotes caspase-mediated apoptosis involving predominantly caspase-8 and also caspase-9 in a probable cell type-specific manner. Involved in activation of the mitochondrial apoptotic pathway, promotes caspase-8-dependent proteolytic maturation of BID independently of FADD in certain cell types and also mediates mitochondrial translocation of BAX and activates BAX-dependent apoptosis coupled to activation of caspase-9, -2 and -3. Involved in innate immune response by acting as an integral adapter in the assembly of various inflammasomes (NLRP2, NLRP3, NLRP6 and AIM2) which recruit and activate caspase-1 leading to processing and secretion of pro-inflammatory cytokines. Caspase-1-dependent inflammation leads to macrophage pyroptosis, a form of cell death. The function as activating adapter in different types of inflammasomes is mediated by the pyrin and CARD domains and their homotypic interactions. Clustered PYCARD nucleates the formation of caspase-1 filaments through the interaction of their respective CARD domains, acting as a platform for of caspase-1 polymerization. In the NLRC4 inflammasomes seems not be required but facilitates the processing of procaspase-1. In cooperation with NOD2 involved in an inflammasome activated by bacterial muramyl dipeptide leading to caspase-1 activation. May be involved in RIGI-triggered pro-inflammatory responses and inflammasome activation. In collaboration with AIM2 which detects cytosolic double-stranded DNA may also be involved in a caspase-1-independent cell death that involves caspase-8. In adaptive immunity may be involved in maturation of dendritic cells to stimulate T-cell immunity and in cytoskeletal rearrangements coupled to chemotaxis and antigen uptake may be involved in post-transcriptional regulation of the guanine nucleotide exchange factor DOCK2; the latter function is proposed to involve the nuclear form. Also involved in transcriptional activation of cytokines and chemokines independent of the inflammasome; this function may involve AP-1, NF-kappa-B, MAPK and caspase-8 signaling pathways. For regulation of NF-kappa-B activating and inhibiting functions have been reported. Modulates NF-kappa-B induction at the level of the IKK complex by inhibiting kinase activity of CHUK and IKBK. Proposed to compete with RIPK2 for association with CASP1 thereby down-regulating CASP1-mediated RIPK2-dependent NF-kappa-B activation and activating interleukin-1 beta processing. Modulates host resistance to DNA virus infection, probably by inducing the cleavage of and inactivating CGAS in presence of cytoplasmic double-stranded DNA. In Bos taurus (Bovine), this protein is Apoptosis-associated speck-like protein containing a CARD (PYCARD).